We begin with the raw amino-acid sequence, 244 residues long: Large ribosomal subunit protein uL2 (244 aa).

2 stretches are compositionally biased toward basic residues: residues 1-12 (MGKRPLVRRRGR) and 234-244 (KTGRARIKERK). Disordered regions lie at residues 1–30 (MGKR…TKAN) and 203–244 (HGGG…KERK).

It belongs to the universal ribosomal protein uL2 family. As to quaternary structure, part of the 50S ribosomal subunit. Forms a bridge to the 30S subunit in the 70S ribosome.

In terms of biological role, one of the primary rRNA binding proteins. Required for association of the 30S and 50S subunits to form the 70S ribosome, for tRNA binding and peptide bond formation. It has been suggested to have peptidyltransferase activity; this is somewhat controversial. Makes several contacts with the 16S rRNA in the 70S ribosome. This chain is Large ribosomal subunit protein uL2, found in Nitrosopumilus maritimus (strain SCM1).